We begin with the raw amino-acid sequence, 130 residues long: DNA-directed RNA polymerase subunit omega (130 aa).

A disordered region spans residues 110–130 (EELLKGLEGLAPPEEQPEEDE).

The protein belongs to the RNA polymerase subunit omega family. In terms of assembly, the RNAP catalytic core consists of 2 alpha, 1 beta, 1 beta' and 1 omega subunit. When a sigma factor is associated with the core the holoenzyme is formed, which can initiate transcription.

The catalysed reaction is RNA(n) + a ribonucleoside 5'-triphosphate = RNA(n+1) + diphosphate. Its function is as follows. Promotes RNA polymerase assembly. Latches the N- and C-terminal regions of the beta' subunit thereby facilitating its interaction with the beta and alpha subunits. This chain is DNA-directed RNA polymerase subunit omega, found in Bradyrhizobium sp. (strain BTAi1 / ATCC BAA-1182).